A 530-amino-acid chain; its full sequence is MSSLGDQRPAAGEQPGARLHVRATGGALLLCLLAVLLGWVWLRRQRACGIPPGPKPRPLVGNFGHLLVPRFLRPQFWLGSGSQTDTVGQHVYLARMARVYGNIFSFFIGHRLVVVLSDFHSVREALVQQAEVFSDRPRMPLISIMTKEKGIVFAHYGPIWKQQRRFSHSTLRHFGLGKLSLEPRIIEEFAYVKEAMQKHGEAPFSPFPIISNAVSNIICSLCFGQRFDYTNKEFKKVLDFMSRGLEICLHSQLFLINICPWFYYLPFGPFKELRQIERDISCFLKNIIREHQESLDASNPQDFIDMYLLHMEEEQGASRRSSFDEDYLFYIIGDLFIAGTDTTTNSLLWCLLYMSLNPDVQKKVHEEIERVIGCDRAPSLTDKAQMPYTEATIMEVQRLSMVVPLAIPHMTSEKTVLQGFTIPKGTVVLINLWSVHRDPAIWEKPDDFCPHRFLDDQGQLLKRETFIPFGIGKRVCMGEQLAKMELFLMFVSLMQTFTFALPEGSEKPVMTGRFGLTLAPHPFNVTISKR.

4 consecutive transmembrane segments (helical) span residues 21–41, 99–119, 247–267, and 328–348; these read VRAT…GWVW, VYGN…LSDF, ICLH…YLPF, and LFYI…NSLL. Cysteine 476 provides a ligand contact to heme. A helical transmembrane segment spans residues 481-501; the sequence is LAKMELFLMFVSLMQTFTFAL.

It belongs to the cytochrome P450 family. Heme is required as a cofactor. As to expression, widely expressed. Expressed in heart, brain and liver.

It is found in the endoplasmic reticulum membrane. The protein localises to the microsome membrane. It localises to the mitochondrion inner membrane. It carries out the reaction an omega-methyl-long-chain fatty acid + reduced [NADPH--hemoprotein reductase] + O2 = an omega-hydroxy-long-chain fatty acid + oxidized [NADPH--hemoprotein reductase] + H2O + H(+). The enzyme catalyses (5Z,8Z,11Z,14Z)-eicosatetraenoate + reduced [NADPH--hemoprotein reductase] + O2 = 19-hydroxy-(5Z,8Z,11Z,14Z)-eicosatetraenoate + oxidized [NADPH--hemoprotein reductase] + H2O + H(+). It catalyses the reaction (5Z,8Z,11Z,14Z)-eicosatetraenoate + reduced [NADPH--hemoprotein reductase] + O2 = 20-hydroxy-(5Z,8Z,11Z,14Z)-eicosatetraenoate + oxidized [NADPH--hemoprotein reductase] + H2O + H(+). The catalysed reaction is N-[(5Z,8Z,11Z,14Z)-eicosatetraenoyl]-serotonin + reduced [NADPH--hemoprotein reductase] + O2 = 2-oxo-N-[(5Z,8Z,11Z,14Z)-eicosatetraenoyl]-serotonin + oxidized [NADPH--hemoprotein reductase] + H2O + H(+). Functionally, a cytochrome P450 monooxygenase involved in the metabolism of arachidonic acid and its conjugates. Mechanistically, uses molecular oxygen inserting one oxygen atom into a substrate, and reducing the second into a water molecule, with two electrons provided by NADPH via cytochrome P450 reductase (CPR; NADPH-ferrihemoprotein reductase). Acts as an omega and omega-1 hydroxylase for arachidonic acid and possibly for other long chain fatty acids. May modulate the arachidonic acid signaling pathway and play a role in other fatty acid signaling processes. May down-regulate the biological activities of N-arachidonoyl-serotonin, an endocannabinoid that has anti-nociceptive effects through inhibition of fatty acid amide hydrolase FAAH, TRPV1 receptor and T-type calcium channels. Catalyzes C-2 oxidation of the indole ring of N-arachidonoyl-serotonin forming a less active product 2-oxo-N-arachidonoyl-serotonin. This Mus musculus (Mouse) protein is Cytochrome P450 2U1.